The primary structure comprises 490 residues: Mitochondria-eating protein (490 aa).

Residues 112 to 210 (IRELSSVHES…RILRDEVSFL (99 aa)) adopt a coiled-coil conformation. 2 stretches are compositionally biased toward low complexity: residues 224–241 (SRSP…SPVR) and 456–490 (RSSS…SSRL). Disordered stretches follow at residues 224 to 253 (SRSP…LTSS) and 455 to 490 (SRSS…SSRL).

The protein belongs to the MIEAP family.

The protein localises to the cytoplasm. Its subcellular location is the mitochondrion outer membrane. It localises to the mitochondrion matrix. Functionally, key regulator of mitochondrial quality that mediates the repairing or degradation of unhealthy mitochondria in response to mitochondrial damage. Mediator of mitochondrial protein catabolic process (also named MALM) by mediating the degradation of damaged proteins inside mitochondria by promoting the accumulation in the mitochondrial matrix of hydrolases that are characteristic of the lysosomal lumen. Also involved in mitochondrion degradation of damaged mitochondria by promoting the formation of vacuole-like structures (named MIV), which engulf and degrade unhealthy mitochondria by accumulating lysosomes. Binds cardiolipin. May form molecular condensates (non-membrane-bounded organelles) within mitochondria that compartmentalize and promote cardiolipin metabolism. The polypeptide is Mitochondria-eating protein (spata18) (Danio rerio (Zebrafish)).